A 202-amino-acid polypeptide reads, in one-letter code: Securin-2 (202 aa).

A disordered region spans residues 60 to 105 (TRKALGTVNRATEKSVKTNGPRKQKQPSFSAKKMTEKTVKTKSSVP). The short motif at 61–64 (RKAL) is the D-box element. The short motif at 163–173 (PPSPVKMPSPP) is the SH3-binding element.

The protein belongs to the securin family. As to expression, expressed at low levels in the pituitary, liver, spleen, prostate, testis, ovary, small intestine and colon. Also expressed in various pituitary, testicular, liver and ovarian tumors.

The protein resides in the cytoplasm. It is found in the nucleus. The polypeptide is Securin-2 (PTTG2) (Homo sapiens (Human)).